Here is a 379-residue protein sequence, read N- to C-terminus: Tryptophan--tRNA ligase, mitochondrial (379 aa).

ATP-binding positions include glutamine 42 and histidine 48 to asparagine 51. A 'HIGH' region motif is present at residues proline 43–asparagine 51. Position 184 (aspartate 184) interacts with L-tryptophan. Residues glycine 196–aspartate 198, valine 235, lysine 244–serine 248, and lysine 247 contribute to the ATP site. The 'KMSKS' region motif lies at lysine 244–serine 248.

The protein belongs to the class-I aminoacyl-tRNA synthetase family. Homodimer.

The protein localises to the mitochondrion matrix. The enzyme catalyses tRNA(Trp) + L-tryptophan + ATP = L-tryptophyl-tRNA(Trp) + AMP + diphosphate + H(+). Mitochondrial aminoacyl-tRNA synthetase that catalyzes the attachment of tryptophan to tRNA(Trp). This Saccharomyces cerevisiae (strain ATCC 204508 / S288c) (Baker's yeast) protein is Tryptophan--tRNA ligase, mitochondrial (MSW1).